The chain runs to 121 residues: Large ribosomal subunit protein bL12 (121 aa).

This sequence belongs to the bacterial ribosomal protein bL12 family. Homodimer. Part of the ribosomal stalk of the 50S ribosomal subunit. Forms a multimeric L10(L12)X complex, where L10 forms an elongated spine to which 2 to 4 L12 dimers bind in a sequential fashion. Binds GTP-bound translation factors.

Functionally, forms part of the ribosomal stalk which helps the ribosome interact with GTP-bound translation factors. Is thus essential for accurate translation. The chain is Large ribosomal subunit protein bL12 from Pseudomonas putida (strain GB-1).